A 131-amino-acid chain; its full sequence is D-ribose pyranase (131 aa).

Residue histidine 20 is the Proton donor of the active site. Substrate contacts are provided by residues aspartate 28, histidine 98, and 120-122 (YAN).

The protein belongs to the RbsD / FucU family. RbsD subfamily. Homodecamer.

The protein resides in the cytoplasm. It catalyses the reaction beta-D-ribopyranose = beta-D-ribofuranose. It participates in carbohydrate metabolism; D-ribose degradation; D-ribose 5-phosphate from beta-D-ribopyranose: step 1/2. Its function is as follows. Catalyzes the interconversion of beta-pyran and beta-furan forms of D-ribose. In Bacillus cereus (strain ZK / E33L), this protein is D-ribose pyranase.